The primary structure comprises 346 residues: MFVDECVVKLQAGDGGRGCISFRREKYEPWGGPNGGDGGRGGDVILLGDDDTNNLVDYKYQPHWNAERGEHGLGKDQHGKDGAHRVLKMPLGTVVIDEATGKPVAEVVEDGQQIVLCKGGNGGWGNTHFKTATTRAPKRANDGHPGERGTYRLVLKSIADVGLVGFPNAGKSSLTCLITRARPRTAAYPFTTLHPQIGIIDYPPDRHGRRRLRLADVPGLIEGASENRGLGHRFLRHIERCALLLVLIDMAGTDGRDPREDYKHLLRELELYDPALLKKPRLVAANKMDVEAAAANLSKFKRRHRTVDVLPLSCLTSEGIELLKKELLKRVTALRGREKVSPRARD.

The region spanning Met1 to Ile158 is the Obg domain. One can recognise an OBG-type G domain in the interval Ala159–Thr332. GTP-binding positions include Gly165 to Ser172, Phe190 to His194, Asp216 to Gly219, Asn286 to Asp289, and Ser313 to Leu315. Positions 172 and 192 each coordinate Mg(2+).

It belongs to the TRAFAC class OBG-HflX-like GTPase superfamily. OBG GTPase family. Monomer. Mg(2+) is required as a cofactor.

The protein localises to the cytoplasm. An essential GTPase which binds GTP, GDP and possibly (p)ppGpp with moderate affinity, with high nucleotide exchange rates and a fairly low GTP hydrolysis rate. Plays a role in control of the cell cycle, stress response, ribosome biogenesis and in those bacteria that undergo differentiation, in morphogenesis control. This is GTPase Obg from Opitutus terrae (strain DSM 11246 / JCM 15787 / PB90-1).